Here is a 467-residue protein sequence, read N- to C-terminus: MSQLLTTRQAEELHKSIIAYLASVNLSESATTLRAELGDAVTIDDATIKKYEGLLEKKWTSVVRLQKKIMDLESRCAALQSELDSATPTSLLRKNQDPTAWLPRAPPRHTLESHRSPVTCVAFHPVFSSLASGSDDTTIKIWDWELGELERTVKGHTKAVLDVDYGGPRGGTLLASCSSDLTIKLWDPSDDYKNIRTLPGHDHSVSSVRFIPSGAAGSPMSGNLLVSASRDKTLRIWDVTTGYCVKTLSGHVDWVRAVAPSIDGRFLFAAGDDRIPRLWDLSAAETRSTFLGHEHVIECVAIAPAASYPHLAVLSGLKKPPSASSSAEFFATGSRDKTIRLWDSRGNLIKTLVGHDNWVRALAFHPGGKYLLSVSDDKTIRCWDLTQECKCVRTIADTHEHFVTCLRWAPPLIKDSGANGDAGANGTPAATTTSNGARQDPNAANKISIRCVIATGSVDQKVRVFAT.

The LisH domain maps to 9–41; the sequence is QAEELHKSIIAYLASVNLSESATTLRAELGDAV. Residues 60-87 are a coiled coil; it reads TSVVRLQKKIMDLESRCAALQSELDSAT. WD repeat units follow at residues 113 to 154, 156 to 196, 200 to 247, 250 to 289, 292 to 352, 354 to 393, 398 to 428, and 429 to 466; these read SHRS…RTVK, HTKA…KNIR, GHDH…CVKT, GHVDWVRAVAPSIDGRFLFAAGDDRIPRLWDLSAAETRST, GHEH…IKTL, GHDNWVRALAFHPGGKYLLSVSDDKTIRCWDLTQECKCVR, THEHFVTCLRWAPPLIKDSGANGDAGANGTP, and AATTTSNGARQDPNAANKISIRCVIATGSVDQKVRVFA. The segment covering 417 to 437 has biased composition (low complexity); sequence GANGDAGANGTPAATTTSNGA. Residues 417 to 441 form a disordered region; that stretch reads GANGDAGANGTPAATTTSNGARQDP.

The protein belongs to the WD repeat LIS1/nudF family. Self-associates. Interacts with nudE and dynein.

Its subcellular location is the cytoplasm. It is found in the cytoskeleton. The protein resides in the spindle pole. In terms of biological role, positively regulates the activity of the minus-end directed microtubule motor protein dynein. May enhance dynein-mediated microtubule sliding by targeting dynein to the microtubule plus end. Required for nuclear migration during vegetative growth as well as development. Required for retrograde early endosome (EE) transport from the hyphal tip. Required for localization of dynein to the mitotic spindle poles. Recruits additional proteins to the dynein complex at SPBs. This chain is Nuclear distribution protein nudF 1, found in Aspergillus clavatus (strain ATCC 1007 / CBS 513.65 / DSM 816 / NCTC 3887 / NRRL 1 / QM 1276 / 107).